The primary structure comprises 241 residues: Dihydropteridine reductase (241 aa).

11-35 (LVYGGRGALGSRCVQAFRARNWWVA) provides a ligand contact to NADP(+). Lysine 70, lysine 76, lysine 93, and lysine 99 each carry N6-succinyllysine. Residue tyrosine 147 is the Proton acceptor of the active site. Serine 170 bears the Phosphoserine mark.

This sequence belongs to the short-chain dehydrogenases/reductases (SDR) family. In terms of assembly, homodimer.

It catalyses the reaction 5,6,7,8-tetrahydropteridine + NAD(+) = 6,7-dihydropteridine + NADH + H(+). The catalysed reaction is 5,6,7,8-tetrahydropteridine + NADP(+) = 6,7-dihydropteridine + NADPH + H(+). In terms of biological role, catalyzes the conversion of quinonoid dihydrobiopterin into tetrahydrobiopterin. The protein is Dihydropteridine reductase (Qdpr) of Rattus norvegicus (Rat).